Reading from the N-terminus, the 1396-residue chain is ATP-binding cassette transporter pdr1 (1396 aa).

Residues 1-22 (MSEQEKGKGDLDDPNSKNTKCP) are disordered. The ABC transporter 1 domain occupies 73 to 320 (LHPINIIFRT…FLDLGFIPAK (248 aa)). Residues 412–622 (LQVFATAKVT…GYESIMLNEF (211 aa)) enclose the ABC transmembrane type-2 1 domain. A run of 6 helical transmembrane segments spans residues 431-451 (YIAT…SLFY), 466-486 (VLSN…DIIF), 512-532 (LVEF…VYFL), 543-563 (FIFY…FRFI), 572-592 (IAAL…GAVM), and 680-700 (GIIL…ANFI). Positions 758-1001 (LCWRDLNFTV…LVNYFKRIHG (244 aa)) constitute an ABC transporter 2 domain. Residue 794 to 801 (GENKSGKS) coordinates ATP. The ABC transmembrane type-2 2 domain maps to 1071-1286 (FQIYKISMRN…FLEGMIGGVL (216 aa)). 5 helical membrane-spanning segments follow: residues 1095–1115 (VAFN…QGVG), 1166–1186 (FIIA…TLFF), 1208–1228 (FAWL…IGIA), 1245–1265 (FVFI…VGFW), and 1361–1381 (CIMI…YYII).

The protein belongs to the ABC transporter superfamily. ABCG family. PDR (TC 3.A.1.205) subfamily.

It localises to the endoplasmic reticulum membrane. In Schizosaccharomyces pombe (strain 972 / ATCC 24843) (Fission yeast), this protein is ATP-binding cassette transporter pdr1 (pdr1).